Consider the following 522-residue polypeptide: Glutamyl-tRNA(Gln) amidotransferase subunit A (522 aa).

Catalysis depends on charge relay system residues Lys-88 and Ser-163. Ser-187 serves as the catalytic Acyl-ester intermediate.

This sequence belongs to the amidase family. GatA subfamily. Heterotrimer of A, B and C subunits.

It carries out the reaction L-glutamyl-tRNA(Gln) + L-glutamine + ATP + H2O = L-glutaminyl-tRNA(Gln) + L-glutamate + ADP + phosphate + H(+). Allows the formation of correctly charged Gln-tRNA(Gln) through the transamidation of misacylated Glu-tRNA(Gln) in organisms which lack glutaminyl-tRNA synthetase. The reaction takes place in the presence of glutamine and ATP through an activated gamma-phospho-Glu-tRNA(Gln). In Paenarthrobacter aurescens (strain TC1), this protein is Glutamyl-tRNA(Gln) amidotransferase subunit A.